Consider the following 125-residue polypeptide: MAQKKRKERRYVPYGVAHIHSTFNNTIITITDPNGAVLAWASGGFFFKGTRKGTPYAAQLASESVAKKVQQTYGMKEIDVFVKGPGPGRETAIRALQAVGLDVKSIKDVTPIPHNGCRPPKARRV.

This sequence belongs to the universal ribosomal protein uS11 family. In terms of assembly, part of the 30S ribosomal subunit. Interacts with proteins S7 and S18. Binds to IF-3.

In terms of biological role, located on the platform of the 30S subunit, it bridges several disparate RNA helices of the 16S rRNA. Forms part of the Shine-Dalgarno cleft in the 70S ribosome. The polypeptide is Small ribosomal subunit protein uS11 (Coprothermobacter proteolyticus (strain ATCC 35245 / DSM 5265 / OCM 4 / BT)).